We begin with the raw amino-acid sequence, 239 residues long: Lactate utilization protein A (239 aa).

This sequence belongs to the LutA/YkgE family.

Is involved in L-lactate degradation and allows cells to grow with lactate as the sole carbon source. The chain is Lactate utilization protein A from Bacillus cereus (strain B4264).